A 405-amino-acid polypeptide reads, in one-letter code: Imidazolonepropionase (405 aa).

Fe(3+)-binding residues include His-73 and His-75. The Zn(2+) site is built by His-73 and His-75. Positions 82, 145, and 178 each coordinate 4-imidazolone-5-propanoate. Residue Tyr-145 participates in N-formimidoyl-L-glutamate binding. Fe(3+) is bound at residue His-243. His-243 serves as a coordination point for Zn(2+). 4-imidazolone-5-propanoate is bound at residue Gln-246. Residue Asp-318 participates in Fe(3+) binding. A Zn(2+)-binding site is contributed by Asp-318. N-formimidoyl-L-glutamate is bound by residues Asn-320 and Gly-322. 4-imidazolone-5-propanoate is bound at residue Thr-323.

Belongs to the metallo-dependent hydrolases superfamily. HutI family. Zn(2+) is required as a cofactor. Fe(3+) serves as cofactor.

It localises to the cytoplasm. The catalysed reaction is 4-imidazolone-5-propanoate + H2O = N-formimidoyl-L-glutamate. It functions in the pathway amino-acid degradation; L-histidine degradation into L-glutamate; N-formimidoyl-L-glutamate from L-histidine: step 3/3. In terms of biological role, catalyzes the hydrolytic cleavage of the carbon-nitrogen bond in imidazolone-5-propanoate to yield N-formimidoyl-L-glutamate. It is the third step in the universal histidine degradation pathway. The polypeptide is Imidazolonepropionase (Brucella suis biovar 1 (strain 1330)).